The following is a 60-amino-acid chain: Short neurotoxin 1 (60 aa).

Disulfide bonds link C3/C22, C17/C39, C41/C52, and C53/C58.

The protein belongs to the three-finger toxin family. Short-chain subfamily. Type I alpha-neurotoxin sub-subfamily. In terms of tissue distribution, expressed by the venom gland.

The protein localises to the secreted. In terms of biological role, binds to muscle nicotinic acetylcholine receptor (nAChR) and inhibit acetylcholine from binding to the receptor, thereby impairing neuromuscular transmission. In Hydrophis ornatus (Ornate reef seasnake), this protein is Short neurotoxin 1.